A 92-amino-acid chain; its full sequence is Small ribosomal subunit protein uS19 (92 aa).

It belongs to the universal ribosomal protein uS19 family.

In terms of biological role, protein S19 forms a complex with S13 that binds strongly to the 16S ribosomal RNA. This chain is Small ribosomal subunit protein uS19, found in Corynebacterium efficiens (strain DSM 44549 / YS-314 / AJ 12310 / JCM 11189 / NBRC 100395).